The chain runs to 236 residues: Phosphoribosylaminoimidazole-succinocarboxamide synthase (236 aa).

Belongs to the SAICAR synthetase family.

The enzyme catalyses 5-amino-1-(5-phospho-D-ribosyl)imidazole-4-carboxylate + L-aspartate + ATP = (2S)-2-[5-amino-1-(5-phospho-beta-D-ribosyl)imidazole-4-carboxamido]succinate + ADP + phosphate + 2 H(+). Its pathway is purine metabolism; IMP biosynthesis via de novo pathway; 5-amino-1-(5-phospho-D-ribosyl)imidazole-4-carboxamide from 5-amino-1-(5-phospho-D-ribosyl)imidazole-4-carboxylate: step 1/2. The protein is Phosphoribosylaminoimidazole-succinocarboxamide synthase of Pseudomonas putida (strain ATCC 700007 / DSM 6899 / JCM 31910 / BCRC 17059 / LMG 24140 / F1).